We begin with the raw amino-acid sequence, 430 residues long: Phosphoribosylamine--glycine ligase (430 aa).

The ATP-grasp domain maps to 109–314; sequence RGLMNKYGID…FLTIAEHIIN (206 aa). 136 to 192 contributes to the ATP binding site; that stretch reads IREYPGDLAVKPTGLTGGKGVKVMGEQVDREGAVEYAMTLKDQVIILEERLLGEEFT. Q272, E284, and N286 together coordinate Mg(2+). Mn(2+)-binding residues include Q272, E284, and N286.

It belongs to the GARS family. It depends on Mg(2+) as a cofactor. Requires Mn(2+) as cofactor.

The enzyme catalyses 5-phospho-beta-D-ribosylamine + glycine + ATP = N(1)-(5-phospho-beta-D-ribosyl)glycinamide + ADP + phosphate + H(+). It functions in the pathway purine metabolism; IMP biosynthesis via de novo pathway; N(1)-(5-phospho-D-ribosyl)glycinamide from 5-phospho-alpha-D-ribose 1-diphosphate: step 2/2. This is Phosphoribosylamine--glycine ligase from Methanocorpusculum labreanum (strain ATCC 43576 / DSM 4855 / Z).